The primary structure comprises 364 residues: Methylthioribose-1-phosphate isomerase (364 aa).

The active-site Proton donor is the aspartate 254.

Belongs to the eIF-2B alpha/beta/delta subunits family. MtnA subfamily.

The protein resides in the cytoplasm. It is found in the nucleus. It carries out the reaction 5-(methylsulfanyl)-alpha-D-ribose 1-phosphate = 5-(methylsulfanyl)-D-ribulose 1-phosphate. The protein operates within amino-acid biosynthesis; L-methionine biosynthesis via salvage pathway; L-methionine from S-methyl-5-thio-alpha-D-ribose 1-phosphate: step 1/6. Catalyzes the interconversion of methylthioribose-1-phosphate (MTR-1-P) into methylthioribulose-1-phosphate (MTRu-1-P). The sequence is that of Methylthioribose-1-phosphate isomerase from Drosophila simulans (Fruit fly).